A 275-amino-acid chain; its full sequence is Polar tube protein 2 (275 aa).

Residues 1-18 (MLLLLSAVAFVSATAVQS) form the signal peptide. N-linked (GlcNAc...) asparagine glycans are attached at residues Asn132 and Asn248. Residues 233–275 (IQKKEIKESPKEGDRNTTQEYDGEGSAEDAEGQQPSADGEGLE) are disordered. Positions 234–249 (QKKEIKESPKEGDRNT) are enriched in basic and acidic residues. Over residues 253 to 263 (YDGEGSAEDAE) the composition is skewed to acidic residues.

It localises to the spore polar tube. In terms of biological role, involved in formation of a polar tube through which the infectious agent is passed on to the host cell. In Encephalitozoon intestinalis (Microsporidian parasite), this protein is Polar tube protein 2 (PTP2).